The primary structure comprises 1152 residues: Receptor-type guanylate cyclase gcy-8 (1152 aa).

The N-terminal stretch at 1–21 is a signal peptide; that stretch reads MRTKKAFLLLTFNVLIYLAAC. Residues 22 to 506 are Extracellular-facing; it reads QETERILANN…GYRNERCDYT (485 aa). Asparagine 31, asparagine 55, asparagine 385, and asparagine 465 each carry an N-linked (GlcNAc...) asparagine glycan. A helical membrane pass occupies residues 507–527; sequence LIIIGAALILLFIVAAVSAFF. At 528 to 1152 the chain is on the cytoplasmic side; it reads AQKILEKRAL…NLKNPTGLQR (625 aa). Positions 567-857 constitute a Protein kinase domain; the sequence is RTKMSNMNYG…RIKLNVETYL (291 aa). ATP-binding positions include 573 to 581 and lysine 593; that span reads MNYGSRNHA. The stretch at 861-899 forms a coiled coil; it reads GSLVDQMTRMMEQYANNLEKLVAERTGMLEEANQRADRL. A Guanylate cyclase domain is found at 927–1057; sequence TVLFSDIVGF…DTVNMASRME (131 aa). Mg(2+) contacts are provided by aspartate 932, isoleucine 933, and aspartate 976.

The protein belongs to the adenylyl cyclase class-4/guanylyl cyclase family. Expressed bilaterally in AFD sensory neurons.

It is found in the cell membrane. The protein resides in the cell projection. The protein localises to the cilium. It catalyses the reaction GTP = 3',5'-cyclic GMP + diphosphate. Inhibited by chloride with an IC(50) of 60 mM. Its function is as follows. Guanylate cyclase involved in the production of the second messenger cGMP. Regulates thermotaxis responses in AFD sensory neurons. May regulate AFD neuronal activity such as calcium responses to temperature gradients. Maintains the microvilli receptive ending morphology of the AFD thermosensory neurons by regulating cGMP levels downstream of kcc-3. cGMP levels antagonize the actin cytoskeleton regulator wsp-1. This chain is Receptor-type guanylate cyclase gcy-8, found in Caenorhabditis elegans.